The following is a 266-amino-acid chain: Nitrate import ATP-binding protein NrtD (266 aa).

The ABC transporter domain occupies Leu-3–Tyr-234. Gly-39–Ser-46 serves as a coordination point for ATP.

This sequence belongs to the ABC transporter superfamily. Nitrate/nitrite/cyanate uptake transporter (NitT) (TC 3.A.1.16) family. In terms of assembly, the complex is composed of two ATP-binding proteins (NrtC and NrtD), two transmembrane proteins (NrtB) and a solute-binding protein (NrtA).

It localises to the cell inner membrane. The enzyme catalyses nitrate(out) + ATP + H2O = nitrate(in) + ADP + phosphate + H(+). Part of the ABC transporter complex NrtABCD involved in nitrate uptake. The complex is probably also involved in nitrite transport. Probably responsible for energy coupling to the transport system. This is Nitrate import ATP-binding protein NrtD (nrtD) from Synechocystis sp. (strain ATCC 27184 / PCC 6803 / Kazusa).